A 192-amino-acid polypeptide reads, in one-letter code: Segregation and condensation protein B (192 aa).

It belongs to the ScpB family. Homodimer. Homodimerization may be required to stabilize the binding of ScpA to the Smc head domains. Component of a cohesin-like complex composed of ScpA, ScpB and the Smc homodimer, in which ScpA and ScpB bind to the head domain of Smc. The presence of the three proteins is required for the association of the complex with DNA.

The protein localises to the cytoplasm. Participates in chromosomal partition during cell division. May act via the formation of a condensin-like complex containing Smc and ScpA that pull DNA away from mid-cell into both cell halves. This chain is Segregation and condensation protein B, found in Oceanobacillus iheyensis (strain DSM 14371 / CIP 107618 / JCM 11309 / KCTC 3954 / HTE831).